The chain runs to 235 residues: tRNA pseudouridine synthase B (235 aa).

Asp-48 serves as the catalytic Nucleophile.

This sequence belongs to the pseudouridine synthase TruB family. Type 1 subfamily.

The enzyme catalyses uridine(55) in tRNA = pseudouridine(55) in tRNA. Functionally, responsible for synthesis of pseudouridine from uracil-55 in the psi GC loop of transfer RNAs. In Parabacteroides distasonis (strain ATCC 8503 / DSM 20701 / CIP 104284 / JCM 5825 / NCTC 11152), this protein is tRNA pseudouridine synthase B.